A 324-amino-acid polypeptide reads, in one-letter code: Kelch domain-containing protein AF_2170 (324 aa).

Kelch repeat units follow at residues Tyr229–Glu276 and Tyr277–Lys323.

The chain is Kelch domain-containing protein AF_2170 from Archaeoglobus fulgidus (strain ATCC 49558 / DSM 4304 / JCM 9628 / NBRC 100126 / VC-16).